The sequence spans 191 residues: dTTP/UTP pyrophosphatase (191 aa).

Asp-68 functions as the Proton acceptor in the catalytic mechanism.

It belongs to the Maf family. YhdE subfamily. Requires a divalent metal cation as cofactor.

The protein localises to the cytoplasm. The enzyme catalyses dTTP + H2O = dTMP + diphosphate + H(+). It catalyses the reaction UTP + H2O = UMP + diphosphate + H(+). Functionally, nucleoside triphosphate pyrophosphatase that hydrolyzes dTTP and UTP. May have a dual role in cell division arrest and in preventing the incorporation of modified nucleotides into cellular nucleic acids. This chain is dTTP/UTP pyrophosphatase, found in Thermoanaerobacter pseudethanolicus (strain ATCC 33223 / 39E) (Clostridium thermohydrosulfuricum).